The chain runs to 493 residues: UDP-glucose 6-dehydrogenase (493 aa).

NAD(+)-binding positions include 11 to 16 (GAGYVG), aspartate 36, arginine 41, and 89 to 93 (VNTPT). A disordered region spans residues 88–110 (SVNTPTKTYGMGKGRAADLKYIE). An N6-acetyllysine modification is found at lysine 107. Residues 129–135 (KSTVPVR) are allosteric switch region. 130 to 132 (STV) is an NAD(+) binding site. Glutamate 161 serves as the catalytic Proton donor/acceptor. Residues 161–165 (EFLAE), 220–224 (KLAAN), arginine 260, and 267–273 (KASVGFG) contribute to the substrate site. Glutamate 165 lines the NAD(+) pocket. Lysine 220 serves as the catalytic Proton donor/acceptor. The Nucleophile role is filled by cysteine 276. 276–279 (CFQK) serves as a coordination point for NAD(+). An important for formation of active hexamer structure region spans residues 321–325 (SLFNT). 338-339 (FK) serves as a coordination point for substrate. Arginine 346 contacts NAD(+). Arginine 442 contributes to the substrate binding site. The disordered stretch occupies residues 466–493 (VSSKRIPYTPGEIPKFSLQDPPNKKPKV). Phosphothreonine is present on threonine 474.

Belongs to the UDP-glucose/GDP-mannose dehydrogenase family. As to quaternary structure, homohexamer.

It carries out the reaction UDP-alpha-D-glucose + 2 NAD(+) + H2O = UDP-alpha-D-glucuronate + 2 NADH + 3 H(+). The protein operates within nucleotide-sugar biosynthesis; UDP-alpha-D-glucuronate biosynthesis; UDP-alpha-D-glucuronate from UDP-alpha-D-glucose: step 1/1. With respect to regulation, UDP-alpha-D-xylose (UDX) acts as a feedback inhibitor. It binds at the same site as the substrate, but functions as allosteric inhibitor by triggering a conformation change that disrupts the active hexameric ring structure and gives rise to an inactive, horseshoe-shaped hexamer. Its function is as follows. Catalyzes the formation of UDP-alpha-D-glucuronate, a constituent of complex glycosaminoglycans. Required for the biosynthesis of chondroitin sulfate and heparan sulfate. Required for embryonic development via its role in the biosynthesis of glycosaminoglycans. Required for proper brain and neuronal development. In Rattus norvegicus (Rat), this protein is UDP-glucose 6-dehydrogenase (Ugdh).